A 123-amino-acid chain; its full sequence is Protein lgg-1 (123 aa).

The Phosphatidylethanolamine amidated glycine moiety is linked to residue G116. The propeptide at 117–123 (GEVEKKE) is removed in mature form.

It belongs to the ATG8 family. Interacts with sepa-1 (via the LIR motifs); the interaction is direct. Interacts with allo-1 (via the LIR motif). Interacts with sqst-1 (via the LIR motifs); the interaction is direct. Both lipidated and unlipidated forms interact with epg-7 (via the LIR motif); the interaction is direct. Interacts with epg-2 (via the LIR motifs); the interaction is direct. Interacts with atg-13; the interaction is direct. Interacts with unc-51 (via the LIR motif); the interaction is direct. Interacts with atg-7; the interaction is direct. Interacts with atg-3. The interaction with atg-7 and atg-3 may be required for the lipidation of lgg-1. In terms of processing, cleaved by atg-4.1 and/or atg-4.2, after Gly-116 to form a thioester bond with 'Cys-523' of atg-7 (E1-like activating enzyme) before being transferred to 'Cys-255' of atg-3 (E2 conjugating enzyme), in order to be amidated with phosphatidylethanolamine. This lipid modification anchors lgg-1 to membranes and can be reversed by atg-4.2, releasing soluble lgg-1. C-terminal cleavage is essential for autophagosome initiation and biogenesis. Lipidation is not essential for autophagy or development but the lipidated form is involved in cargo recognition and autophagosome biogenesis. Lipidation regulates lgg-2-positive autophagosome formation. As to expression, expressed in PLML touch receptor neuron and in the ventral nerve cord. Expressed in AIY interneurons.

The protein localises to the preautophagosomal structure. It localises to the cytoplasmic vesicle. Its subcellular location is the autophagosome. It is found in the autophagosome membrane. The protein resides in the lysosome lumen. The protein localises to the mitochondrion. It localises to the cytoplasm. Its subcellular location is the phagosome membrane. It is found in the cell membrane. The protein resides in the cell projection. The protein localises to the dendrite. It localises to the perikaryon. Functionally, ubiquitin-like modifier involved in the formation of autophagosomal vacuoles (autophagosomes). When lipidated mediates tethering between adjacent membranes and stimulates membrane fusion during autophagy. Recruits lipidated-lgg-2 to maturing autophagosomes. Acts in the aggrephagy pathway, which is the macroautophagic degradation of ubiquitinated protein aggregates, and preferentially interacts with autophagy proteins and substrates containing LIR motifs to mediate autophagosome formation and protein aggregate degradation. In particular, binds to components of the unc-51-atg-13 complex to regulate autophagosome formation and cargo sequestration. Required for the degradation of specific sepa-1- and sqst-1-containing protein aggregates during embryogenesis. Involved in allophagy, which is an autophagic process in which paternal mitochondria and organelles are degraded during fertilization, and moreover is required for the formation of lgg-2-positive allophagic autophagosomes in embryos. Involved in the clearance of apoptotic cells by promoting the delivery of engulfed apoptotic cells to the lysosome. Plays a role in the distribution and clearance of germ cell specific P-granules from somatic cells. Also plays a role in the autophagy-mediated degradation of ribosomal RNA and ribosomal proteins in lysosomes. Involved in xenophagy, the autophagy-mediated degradation of pathogens and pathogen products, such as toxins. Required for normal survival when exposed to pathogenic bacteria S.typhimurium probably by promoting autophagic degradation of intracellular S.typhimurium. Also plays a role in membrane-pore repair. Plays a role in mitophagy. Essential for dauer development and longevity, including longevity in response to moderate, short-term heat shock, also known as a hormetic heat shock. In Caenorhabditis elegans, this protein is Protein lgg-1.